Here is a 256-residue protein sequence, read N- to C-terminus: Ribosomal RNA small subunit methyltransferase A (256 aa).

S-adenosyl-L-methionine is bound by residues Asn12, Leu14, Gly39, Glu60, Asp85, and Asn103.

This sequence belongs to the class I-like SAM-binding methyltransferase superfamily. rRNA adenine N(6)-methyltransferase family. RsmA subfamily.

The protein localises to the cytoplasm. It catalyses the reaction adenosine(1518)/adenosine(1519) in 16S rRNA + 4 S-adenosyl-L-methionine = N(6)-dimethyladenosine(1518)/N(6)-dimethyladenosine(1519) in 16S rRNA + 4 S-adenosyl-L-homocysteine + 4 H(+). In terms of biological role, specifically dimethylates two adjacent adenosines (A1518 and A1519) in the loop of a conserved hairpin near the 3'-end of 16S rRNA in the 30S particle. May play a critical role in biogenesis of 30S subunits. This Legionella pneumophila subsp. pneumophila (strain Philadelphia 1 / ATCC 33152 / DSM 7513) protein is Ribosomal RNA small subunit methyltransferase A.